The sequence spans 346 residues: [LysW]-lysine/[LysW]-ornithine hydrolase (346 aa).

Position 68 (His-68) interacts with Zn(2+). Asp-70 is an active-site residue. Asp-92 provides a ligand contact to Zn(2+). Glu-122 serves as the catalytic Proton acceptor. Zn(2+) contacts are provided by Glu-123, Glu-146, and His-317.

It belongs to the peptidase M20A family. LysK subfamily. Zn(2+) serves as cofactor. It depends on Co(2+) as a cofactor.

The protein localises to the cytoplasm. The catalysed reaction is [amino-group carrier protein]-C-terminal-gamma-(L-lysyl)-L-glutamate + H2O = [amino-group carrier protein]-C-terminal-L-glutamate + L-lysine. It carries out the reaction [amino-group carrier protein]-C-terminal-gamma-(L-ornithyl)-L-glutamate + H2O = [amino-group carrier protein]-C-terminal-L-glutamate + L-ornithine. The protein operates within amino-acid biosynthesis; L-lysine biosynthesis via AAA pathway; L-lysine from L-alpha-aminoadipate (Thermus route): step 5/5. It functions in the pathway amino-acid biosynthesis; L-arginine biosynthesis. Its function is as follows. Catalyzes the release of L-lysine from [LysW]-gamma-L-lysine and the release of L-ornithine from [LysW]-L-ornithine. This is [LysW]-lysine/[LysW]-ornithine hydrolase from Saccharolobus islandicus (strain Y.G.57.14 / Yellowstone #1) (Sulfolobus islandicus).